A 418-amino-acid polypeptide reads, in one-letter code: MLHPRARTMLLLSLPAVAIGIASSLILIVVMKIASVLQTLLWQRLPGTLGIAQDSPFWIIAILTLTGIAVGLVIRFSQGHAGPDPACEPLIGAPVPPSALPGLIVALILGLAGGVSLGPEHPIMTVNIALAVAIGARLLPRVNRMEWTILASAGTIGALFGTPVAAALIFSQTLNGSSEVPLWDRLFAPLMAAAAGALTTGLFFHPHFSLPIAHYGQMEMTDILSGAIVAAIAIAAGMVAVWCLPRLHAMMHQIKNPVLMLGVGGFILGILGVIAGPVSLFKGLDEMQQMVANQAFSTSDYFLLAVIKLAALVVAAASGFRGGRIFPAVFVGVALGLMLHEHVPAVPAAITVSCAILGIVLVVTRDGWLSLFMAAAVVPNTTLLPLLCIVMLPAWLLLAGKPIMMVNRPKQQPPHDNV.

12 helical membrane passes run 10-30, 54-74, 99-119, 120-140, 149-169, 186-206, 223-243, 258-278, 300-320, 322-342, 343-363, and 386-406; these read LLLS…LIVV, DSPF…GLVI, ALPG…SLGP, EHPI…RLLP, ILAS…AALI, LFAP…FFHP, ILSG…AVWC, VLML…AGPV, DYFL…ASGF, GGRI…LHEH, VPAV…VLVV, and LLCI…IMMV.

The protein belongs to the chloride channel (TC 2.A.49) family.

It is found in the cell membrane. In Escherichia fergusonii (strain ATCC 35469 / DSM 13698 / CCUG 18766 / IAM 14443 / JCM 21226 / LMG 7866 / NBRC 102419 / NCTC 12128 / CDC 0568-73), this protein is Putative ion-transport protein YfeO.